A 209-amino-acid polypeptide reads, in one-letter code: Large ribosomal subunit protein uL4 (209 aa).

Positions 50–89 are disordered; sequence MTKTKGLVSGGGKKPFKQKGTGGARQGSSRSILMPGGGTA.

It belongs to the universal ribosomal protein uL4 family. In terms of assembly, part of the 50S ribosomal subunit.

In terms of biological role, one of the primary rRNA binding proteins, this protein initially binds near the 5'-end of the 23S rRNA. It is important during the early stages of 50S assembly. It makes multiple contacts with different domains of the 23S rRNA in the assembled 50S subunit and ribosome. Functionally, forms part of the polypeptide exit tunnel. This is Large ribosomal subunit protein uL4 from Bdellovibrio bacteriovorus (strain ATCC 15356 / DSM 50701 / NCIMB 9529 / HD100).